A 640-amino-acid polypeptide reads, in one-letter code: MAKNTQTQALKILPLGGLHEIGKNTCVFEYDDEILLLDAGLAFPTDDMHGVNVVLPDMTYLRENREKIKGMVVTHGHEDHIGGIAYHLKQFDIPIIYGPRLAMALLRDKLEEAGMLERTNLQTVSPREMVRLGKSFVVEFIRNTHSIADSYCLAIHTPLGVVMHSGDFKIDHTPIDGEFFDLQKVAEYGEKGVLCLLSDSTNAEVPGITPSEASVIPNLDRVFSQAEGRLMVTTFASSVHRVNIILSLAQKHQRKVAVVGRSMLNVIAHARKLGYIKCPDNLFVPLKAARNLPDQQQLILTTGSQGEPLAAMTRISNGEHPQIKIRQGDTVVFSANPIPGNTIAVVNTIDRLMMQGANVIYGKHQGIHVSGHASQEEHKMLLALTRPKFFVPVHGEHRMLVKHSQMAQAQGIPSENIVIVNNGDVIELTGDRIRVAGQVPSGIELVDQAGIVHESTMAERQQMAEDGLVTVAAALSKTGTLLAYPEVHCRGVVMTIQPKLLEELIVRTIENFLTERWSEFTHGSNGSTEVSWNALQKELESSLQRLIKRELQSSPMVLLMLQTDTPIELDQVPQNVSTVSATSATPAPRKKVVLTKTPEPKVKAKPEKKVVTTAEPSAQPVSTTKVYRRSRKRSTTSVSS.

The Zn(2+) site is built by His75, His77, Asp79, His80, His145, and Asp167. Position 368–372 (368–372 (HVSGH)) interacts with substrate. His394 contributes to the Zn(2+) binding site. The tract at residues 578-640 (TVSATSATPA…RKRSTTSVSS (63 aa)) is disordered. Positions 598 to 610 (PEPKVKAKPEKKV) are enriched in basic and acidic residues.

The protein belongs to the metallo-beta-lactamase superfamily. RNA-metabolizing metallo-beta-lactamase-like family. Bacterial RNase J subfamily. Homodimer, may be a subunit of the RNA degradosome. Zn(2+) is required as a cofactor.

It is found in the cytoplasm. Its function is as follows. An RNase that has 5'-3' exonuclease and possibly endoonuclease activity. Involved in maturation of rRNA and in some organisms also mRNA maturation and/or decay. The polypeptide is Ribonuclease J (Synechocystis sp. (strain ATCC 27184 / PCC 6803 / Kazusa)).